A 101-amino-acid chain; its full sequence is Phosphoribosyl-AMP cyclohydrolase (101 aa).

D71 contributes to the Mg(2+) binding site. C72 contributes to the Zn(2+) binding site. Residues D73 and D75 each contribute to the Mg(2+) site. C88 and C95 together coordinate Zn(2+).

Belongs to the PRA-CH family. Homodimer. Mg(2+) serves as cofactor. Requires Zn(2+) as cofactor.

Its subcellular location is the cytoplasm. The enzyme catalyses 1-(5-phospho-beta-D-ribosyl)-5'-AMP + H2O = 1-(5-phospho-beta-D-ribosyl)-5-[(5-phospho-beta-D-ribosylamino)methylideneamino]imidazole-4-carboxamide. Its pathway is amino-acid biosynthesis; L-histidine biosynthesis; L-histidine from 5-phospho-alpha-D-ribose 1-diphosphate: step 3/9. Functionally, catalyzes the hydrolysis of the adenine ring of phosphoribosyl-AMP. The protein is Phosphoribosyl-AMP cyclohydrolase of Bacillus cereus (strain 03BB102).